The following is a 994-amino-acid chain: Receptor-like protein 6 (994 aa).

Positions M1–C25 are cleaved as a signal peptide. Residues N26–E946 are Extracellular-facing. N-linked (GlcNAc...) asparagine glycosylation is found at N116, N134, and N154. LRR repeat units follow at residues L122–K146, M148–L171, L174–H199, F205–Y228, W230–I253, P254–N278, L280–L301, K302–L325, S326–L349, K350–L373, Q375–L397, S398–I421, S423–L445, L446–S471, S477–S497, S498–Q520, R521–L544, E546–G569, and K571–Y595. N277 and N287 each carry an N-linked (GlcNAc...) asparagine glycan. N420, N435, and N442 each carry an N-linked (GlcNAc...) asparagine glycan. N489 carries N-linked (GlcNAc...) asparagine glycosylation. 3 N-linked (GlcNAc...) asparagine glycosylation sites follow: N522, N554, and N561. The LRR 20; degenerate repeat unit spans residues L597–G613. N-linked (GlcNAc...) asparagine glycosylation is present at N602. LRR repeat units follow at residues L614 to A637, M639 to A663, V665 to C687, A689 to S710, L711 to G737, P739 to N762, L803 to L827, K828 to L851, T852 to L875, and S877 to R900. N649 carries N-linked (GlcNAc...) asparagine glycosylation. N-linked (GlcNAc...) asparagine glycosylation occurs at N701. The N-linked (GlcNAc...) asparagine glycan is linked to N762. N-linked (GlcNAc...) asparagine glycans are attached at residues N834 and N850. N-linked (GlcNAc...) asparagine glycans are attached at residues N882 and N902. Residues L947–M967 traverse the membrane as a helical segment. The Cytoplasmic portion of the chain corresponds to G968–R994.

The protein belongs to the RLP family.

It is found in the cell membrane. The chain is Receptor-like protein 6 from Arabidopsis thaliana (Mouse-ear cress).